Here is a 264-residue protein sequence, read N- to C-terminus: MFSGEGASQIRIAPEDKPIQWCYQILKSRDFKSARYITQMNLKLSKTRHDEYEKGLAICDILIAAENRLPNGLLDCYGMIRMTRPGLVLYQNIEKELNLLGWGNISNPFPFRQEASEKFFFAWSLLSNPTIKEMYDYATSDEVNLEPQGNVNEYMDVDSSSQSGYGLGSVLCSDLPGSEYLKEFADVYPLPLAEKGQAPHNRFGWYDHNVGPETNNNVVVTYEDAKEEECDMSSSSELRIINGRRVKITIEEAAETSDTPSCSR.

In terms of tissue distribution, paternally imprinted expression in the endosperm.

Its function is as follows. Product of a dosage-sensitive gene that contributes to the maintenance of paternally and maternally imprinted gene expression in the endosperm in order to balance parental contributions. Underlies postzygotic reproductive isolation by promoting triploid seed arrest in a genetic dosage-dependent manner, thus being a component of postzygotic interploidy hybridization barriers. The chain is Protein ADMETOS from Arabidopsis thaliana (Mouse-ear cress).